The following is a 258-amino-acid chain: Snake venom serine protease KN13 (258 aa).

A signal peptide spans 1–18; it reads MVLIRVLANLLILQLSYA. Positions 19-24 are excised as a propeptide; sequence QRSSEL. A Peptidase S1 domain is found at 25-249; it reads VIGGDECNIN…HLDWIQNIIA (225 aa). Disulfide bonds link cysteine 31/cysteine 163, cysteine 50/cysteine 66, cysteine 98/cysteine 256, cysteine 142/cysteine 210, cysteine 174/cysteine 189, and cysteine 200/cysteine 225. Residue histidine 65 is the Charge relay system of the active site. Residue asparagine 103 is glycosylated (N-linked (GlcNAc...) asparagine). The active-site Charge relay system is the aspartate 110. 4 N-linked (GlcNAc...) asparagine glycosylation sites follow: asparagine 121, asparagine 122, asparagine 154, and asparagine 170. Serine 204 (charge relay system) is an active-site residue. Residue asparagine 251 is glycosylated (N-linked (GlcNAc...) asparagine).

Belongs to the peptidase S1 family. Snake venom subfamily. As to quaternary structure, monomer. As to expression, expressed by the venom gland.

It is found in the secreted. Functionally, snake venom serine protease that may act in the hemostasis system of the prey. The polypeptide is Snake venom serine protease KN13 (Trimeresurus stejnegeri (Chinese green tree viper)).